Here is a 399-residue protein sequence, read N- to C-terminus: Coenzyme A biosynthesis bifunctional protein CoaBC (399 aa).

The tract at residues 1–190 (MQSLAGKKIL…FAPKILVGKR (190 aa)) is phosphopantothenoylcysteine decarboxylase. The Proton donor role is filled by Cys159. The interval 191–399 (VLITAGPTRE…AVMHLIHEQM (209 aa)) is phosphopantothenate--cysteine ligase. CTP contacts are provided by residues Asp279, Lys289, 307-310 (PDIV), Phe326, Lys340, and Lys344.

It in the N-terminal section; belongs to the HFCD (homo-oligomeric flavin containing Cys decarboxylase) superfamily. The protein in the C-terminal section; belongs to the PPC synthetase family. The cofactor is Mg(2+). It depends on FMN as a cofactor.

The enzyme catalyses N-[(R)-4-phosphopantothenoyl]-L-cysteine + H(+) = (R)-4'-phosphopantetheine + CO2. The catalysed reaction is (R)-4'-phosphopantothenate + L-cysteine + CTP = N-[(R)-4-phosphopantothenoyl]-L-cysteine + CMP + diphosphate + H(+). It functions in the pathway cofactor biosynthesis; coenzyme A biosynthesis; CoA from (R)-pantothenate: step 2/5. It participates in cofactor biosynthesis; coenzyme A biosynthesis; CoA from (R)-pantothenate: step 3/5. Its function is as follows. Catalyzes two sequential steps in the biosynthesis of coenzyme A. In the first step cysteine is conjugated to 4'-phosphopantothenate to form 4-phosphopantothenoylcysteine. In the second step the latter compound is decarboxylated to form 4'-phosphopantotheine. The chain is Coenzyme A biosynthesis bifunctional protein CoaBC from Vibrio cholerae serotype O1 (strain ATCC 39315 / El Tor Inaba N16961).